The chain runs to 426 residues: D-tagatose-1,6-bisphosphate aldolase subunit KbaZ (426 aa).

The protein belongs to the GatZ/KbaZ family. KbaZ subfamily. Forms a complex with KbaY.

It functions in the pathway carbohydrate metabolism; D-tagatose 6-phosphate degradation; D-glyceraldehyde 3-phosphate and glycerone phosphate from D-tagatose 6-phosphate: step 2/2. In terms of biological role, component of the tagatose-1,6-bisphosphate aldolase KbaYZ that is required for full activity and stability of the Y subunit. Could have a chaperone-like function for the proper and stable folding of KbaY. When expressed alone, KbaZ does not show any aldolase activity. The sequence is that of D-tagatose-1,6-bisphosphate aldolase subunit KbaZ from Escherichia coli O8 (strain IAI1).